The chain runs to 296 residues: Guided entry of tail-anchored proteins factor CAMLG (296 aa).

Positions 1-79 are disordered; that stretch reads MESMAVATDG…SDKLNSLSVP (79 aa). The Cytoplasmic segment spans residues 1 to 189; sequence MESMAVATDG…NTTEEFDSFR (189 aa). Ser55 bears the Phosphoserine mark. A compositionally biased stretch (basic and acidic residues) spans 61–72; that stretch reads SQTKSKQQDSDK. Residues 190–207 form a helical membrane-spanning segment; sequence IFRLVGCALLALGVRAFV. Residues 208–212 are Lumenal-facing; that stretch reads CKYLS. Cys208 and Cys284 are oxidised to a cystine. Residues 213–231 traverse the membrane as a helical segment; sequence IFAPFLTLQLAYMGLYKYF. The Cytoplasmic segment spans residues 232–269; it reads PKSEKKIKTTVLTAALLLSGIPAEVINRSMDTYSKMGE. Residues 270-288 traverse the membrane as a helical segment; that stretch reads VFTDLCVYFFTFIFCHELL. Over 289 to 296 the chain is Lumenal; the sequence is DYWGSEVP.

As to quaternary structure, component of the Golgi to ER traffic (GET) complex, which is composed of GET1/WRB, CAMLG/GET2 and GET3/TRC40. Within the complex, GET1 and CAMLG form a heterotetramer which is stabilized by phosphatidylinositol binding and which binds to the GET3 homodimer. Interacts (via C-terminus) with GET1. Interacts (via N-terminus) with GET3. GET3 shows a higher affinity for CAMLG than for GET1. Interacts (via N-terminus) with TNFRSF13B/TACI (via C-terminus). In terms of assembly, (Microbial infection) Interacts with human herpes virus 8/HHV-8 protein K7; this interaction modulates intracellular calcium concentration. As to expression, ubiquitous. Highest levels in brain, testis and ovary.

It localises to the endoplasmic reticulum membrane. Its function is as follows. Required for the post-translational delivery of tail-anchored (TA) proteins to the endoplasmic reticulum. Together with GET1/WRB, acts as a membrane receptor for soluble GET3/TRC40, which recognizes and selectively binds the transmembrane domain of TA proteins in the cytosol. Required for the stability of GET1. Stimulates calcium signaling in T cells through its involvement in elevation of intracellular calcium. Essential for the survival of peripheral follicular B cells. In Homo sapiens (Human), this protein is Guided entry of tail-anchored proteins factor CAMLG.